Consider the following 77-residue polypeptide: Integrin beta-2 (77 aa).

C36 and C43 form a disulfide bridge. An N-linked (GlcNAc...) asparagine glycan is attached at N54.

This sequence belongs to the integrin beta chain family. Dimer of an alpha and beta subunit.

The protein localises to the membrane. In terms of biological role, integrins are a large family of cell surface glycoproteins that mediate cell to cell and cell to matrix adhesion. The protein is Integrin beta-2 (itgb2) of Xenopus laevis (African clawed frog).